Here is a 757-residue protein sequence, read N- to C-terminus: Probable serine/threonine-protein kinase pknA2 (757 aa).

A Protein kinase domain is found at 14-274 (YRIVRNIAEG…DGAAAAEELS (261 aa)). ATP-binding positions include 20-28 (IAEGGMATV) and Lys43. Asp140 (proton acceptor) is an active-site residue. Residues 344-387 (DTGGAADVNPPAPPVAPTTALDSSTPADASAPHKTQIMAQSGSE) form a disordered region. 3 PASTA domains span residues 466–539 (DANA…VVSK), 545–614 (TIPK…TLSK), and 615–681 (GPMP…VISK).

The protein belongs to the protein kinase superfamily. Ser/Thr protein kinase family.

It catalyses the reaction L-seryl-[protein] + ATP = O-phospho-L-seryl-[protein] + ADP + H(+). The catalysed reaction is L-threonyl-[protein] + ATP = O-phospho-L-threonyl-[protein] + ADP + H(+). This Bifidobacterium longum (strain NCC 2705) protein is Probable serine/threonine-protein kinase pknA2 (pknA2).